We begin with the raw amino-acid sequence, 235 residues long: Aspartate/glutamate leucyltransferase (235 aa).

It belongs to the R-transferase family. Bpt subfamily.

Its subcellular location is the cytoplasm. The catalysed reaction is N-terminal L-glutamyl-[protein] + L-leucyl-tRNA(Leu) = N-terminal L-leucyl-L-glutamyl-[protein] + tRNA(Leu) + H(+). The enzyme catalyses N-terminal L-aspartyl-[protein] + L-leucyl-tRNA(Leu) = N-terminal L-leucyl-L-aspartyl-[protein] + tRNA(Leu) + H(+). Functions in the N-end rule pathway of protein degradation where it conjugates Leu from its aminoacyl-tRNA to the N-termini of proteins containing an N-terminal aspartate or glutamate. The protein is Aspartate/glutamate leucyltransferase of Pseudomonas paraeruginosa (strain DSM 24068 / PA7) (Pseudomonas aeruginosa (strain PA7)).